A 245-amino-acid polypeptide reads, in one-letter code: MSTGEFLYEGKAKIIYRTDDPDILLAQYKDDATAFNAQKRGTITNKGRINCAIATHLFKVLEAAGIATHFIDQPNPDQMRMRAVQIVPLEVVVRNIAAGSLCQQTGLALGVPLSQPLVDFYYKDDALGDPLLTRDRIFLLELTTPEQLEQLRQLALRINQILINFFHQCGITLVDFKLEFGMTSDQQLLLADEISPDTCRLWDDAESDPTRRVMDKDRFRRDLGEVDTAYARVMERVLAQDIYVP.

It belongs to the SAICAR synthetase family.

The catalysed reaction is 5-amino-1-(5-phospho-D-ribosyl)imidazole-4-carboxylate + L-aspartate + ATP = (2S)-2-[5-amino-1-(5-phospho-beta-D-ribosyl)imidazole-4-carboxamido]succinate + ADP + phosphate + 2 H(+). Its pathway is purine metabolism; IMP biosynthesis via de novo pathway; 5-amino-1-(5-phospho-D-ribosyl)imidazole-4-carboxamide from 5-amino-1-(5-phospho-D-ribosyl)imidazole-4-carboxylate: step 1/2. This Acaryochloris marina (strain MBIC 11017) protein is Phosphoribosylaminoimidazole-succinocarboxamide synthase.